A 558-amino-acid chain; its full sequence is REST corepressor spr-1 (558 aa).

Residues 1–106 (MDLYDDDGES…KVKGPLSNTN (106 aa)) form a disordered region. The segment covering 36–56 (TIEENVPEVEENTLLEEDSLV) has biased composition (acidic residues). A compositionally biased stretch (basic residues) spans 69-80 (KPSKSKRKRKRS). In terms of domain architecture, ELM2 spans 107–192 (KEINVGTEFQ…SAIAEVARRN (86 aa)). The 52-residue stretch at 193–244 (ELKDVWTDQEITLFENCYQIFGKNFSQIRSALCHRSLQSIVQFYYESKKRVK) folds into the SANT 1 domain. The GATA-type zinc-finger motif lies at 271-325 (AIFESMCDNCGEKAENMQINNAMNRPECRACLIYFNQTGVPRPTSLRLVLAERIR). Polar residues predominate over residues 378–402 (CTENGNVGETSSPSAQKTEIQSESD). A disordered region spans residues 378–406 (CTENGNVGETSSPSAQKTEIQSESDGSGP). One can recognise an SANT 2 domain in the interval 481–532 (HYSQDWTQLERSQVIRCFNMYGAHFEHIADVIGTKTPDQVYQFYLENQKAID).

Belongs to the CoREST family. As to quaternary structure, probably part of a large repressor complex. Interacts with histone demethylase spr-5/lsd-1.

The protein resides in the nucleus. In terms of biological role, probable corepressor protein, which probably participates in the transcriptional repression of the presenilin protein hop-1. Probably acts via the formation of a multiprotein complex that deacetylates and demethylates specific sites on histones. Acts redundantly with the transcriptional repressor lin-35 to play a role in vulval morphogenesis and promote germline proliferation. The sequence is that of REST corepressor spr-1 from Caenorhabditis elegans.